The chain runs to 99 residues: Large ribosomal subunit protein bL27 (99 aa).

Residues 1-9 (MLLMNLQLF) constitute a propeptide that is removed on maturation.

It belongs to the bacterial ribosomal protein bL27 family. Post-translationally, the N-terminus is cleaved by ribosomal processing cysteine protease Prp.

The protein is Large ribosomal subunit protein bL27 of Clostridium novyi (strain NT).